The following is a 461-amino-acid chain: Lysosomal proton-coupled steroid conjugate and bile acid symporter SLC46A3 (461 aa).

Residues 1 to 25 (MKISFIEPAILLYAFAMTLTIPLTA) form the signal peptide. Topologically, residues 26–70 (QYVYRRIWEETGNYTFTSSSNVSECEQNKSSSTFAFQEEVQKKAS) are extracellular. Residues N38, N46, and N53 are each glycosylated (N-linked (GlcNAc...) asparagine). A helical transmembrane segment spans residues 71–91 (LFSLQVEISGLIPGLVSTFML). Over 92–103 (LSSSDNHGRKLP) the chain is Cytoplasmic. A helical transmembrane segment spans residues 104–124 (MVLSSLGSLGTNLWLCAMSYF). Residues 125–135 (DLPLQLLVAST) lie on the Extracellular side of the membrane. The helical transmembrane segment at 136 to 156 (FIGALFGNYTTFWGACFAYIV) threads the bilayer. Residues 157 to 170 (DQEKEYKHRIIRIA) lie on the Cytoplasmic side of the membrane. The chain crosses the membrane as a helical span at residues 171 to 191 (VLDFMLGVVTGLTGLSSGYFI). Residues 192-197 (RELGFA) lie on the Extracellular side of the membrane. A helical transmembrane segment spans residues 198–218 (WSYFIIAVVVLVNLAYILFFL). Residues 219–260 (SDPIKESSSQIVTMSCSESLKDLFYRTYMLFKNGSCKRRSLL) are Cytoplasmic-facing. A helical transmembrane segment spans residues 261–281 (CLLIFTLVVYFFVVFGITPVF). The Extracellular segment spans residues 282 to 301 (TLYELGPPLCWNEVYIGYGS). The chain crosses the membrane as a helical span at residues 302-322 (ALGSLSFLSSFLGIWLFSYCL). The Cytoplasmic portion of the chain corresponds to 323 to 324 (KD). The helical transmembrane segment at 325-345 (IHIAYVGIFTTMVGMMLTAFT) threads the bilayer. The Extracellular portion of the chain corresponds to 346–347 (RT). The chain crosses the membrane as a helical span at residues 348 to 368 (TLMMFLVRISFFFTIMPLSIL). Residues 369–381 (RSMLSKVVHSTEQ) are Cytoplasmic-facing. Residues 382–402 (GVLFACIAFLETLGGVTSTSA) form a helical membrane-spanning segment. Residues 403–415 (YNGIYSATVAWYP) lie on the Extracellular side of the membrane. A helical membrane pass occupies residues 416–436 (GFVFLLSAGLLVLPAVSLCMV). At 437–461 (KCIGWEEGSYTLLIHDEPSEHTSDS) the chain is on the cytoplasmic side. Positions 446 to 449 (YTLL) match the Tyrosine-based lysosomal-sorting motif motif.

The protein belongs to the major facilitator superfamily. SLC46A family.

The protein localises to the lysosome membrane. The enzyme catalyses estrone 3-sulfate(out) + n H(+)(out) = estrone 3-sulfate(in) + n H(+)(in). The catalysed reaction is 25-hydroxyvitamin D3 sulfate(out) + n H(+)(out) = 25-hydroxyvitamin D3 sulfate(in) + n H(+)(in). It catalyses the reaction cholate(out) + n H(+)(out) = cholate(in) + n H(+)(in). It carries out the reaction glycocholate(out) + n H(+)(out) = glycocholate(in) + n H(+)(in). The enzyme catalyses taurocholate(out) + n H(+)(out) = taurocholate(in) + n H(+)(in). The catalysed reaction is dehydroepiandrosterone 3-sulfate(out) + n H(+)(out) = dehydroepiandrosterone 3-sulfate(in) + n H(+)(in). It catalyses the reaction N-acetyl-D-muramoyl-L-alanyl-D-isoglutamine(out) + n H(+)(out) = N-acetyl-D-muramoyl-L-alanyl-D-isoglutamine(in) + n H(+)(in). It carries out the reaction 2',3'-cGAMP(out) + n H(+)(out) = 2',3'-cGAMP(in) + n H(+)(in). Functionally, lysosomal proton-coupled steroid conjugate and bile acid transporter. Preferentially recognizes lipophilic steroid conjugates or bile acis as endogenous substrates and seems to mediate escape from lysosomes to the cytoplasm. Modulates hepatic cytosolic copper homeostasis, maybe acting as a lysosomal copper transporter and sequestering copper ions in the lysosome. Delivers pathogen-associated molecular patterns to cytosolic pattern recognition receptors as part of the innate immune response to microbes. Selectively transports bacterial muramyl dipeptide (MDP) into the cytosol for recognition by NOD2, triggering inflammatory responses. Likely acts as a redundant importer of cyclic GMP-AMP dinucleotides (cGAMPs) in monocyte and macrophage cell lineages. The transport mechanism, its electrogenicity and stoichiometry remain to be elucidated. The polypeptide is Lysosomal proton-coupled steroid conjugate and bile acid symporter SLC46A3 (Slc46a3) (Rattus norvegicus (Rat)).